The chain runs to 529 residues: GMP synthase [glutamine-hydrolyzing] (529 aa).

A Glutamine amidotransferase type-1 domain is found at 13–204 (PVLVVDFGAQ…LLETAGLEPT (192 aa)). C90 serves as the catalytic Nucleophile. Residues H178 and E180 contribute to the active site. In terms of domain architecture, GMPS ATP-PPase spans 205-403 (WTAGNIAEQL…LGLPEEIVAR (199 aa)). 233–239 (SGGVDSA) provides a ligand contact to ATP.

Homodimer.

It carries out the reaction XMP + L-glutamine + ATP + H2O = GMP + L-glutamate + AMP + diphosphate + 2 H(+). It functions in the pathway purine metabolism; GMP biosynthesis; GMP from XMP (L-Gln route): step 1/1. Its function is as follows. Catalyzes the synthesis of GMP from XMP. The protein is GMP synthase [glutamine-hydrolyzing] of Corynebacterium jeikeium (strain K411).